The chain runs to 223 residues: MLRRINIVDNPNIGVFILATDDLAVVPYNLLDEKVKLIEETLEVDAVKSSISGCNLIGSLAVANSNGIVVSPHVLDREVKQFEELGLNVATIPGNYTAVGNIVAANDTGAIVSPFLSDEAVKVIEDTLDVNVESTSMVGSDIIGSLITVTNKGFLMDKNATETEVDFARDVFGVEGDIGTVGRGISLVGACSLANSSGAIVAKESTGPEMARVEEALGFLDDL.

Belongs to the eIF-6 family.

Its function is as follows. Binds to the 50S ribosomal subunit and prevents its association with the 30S ribosomal subunit to form the 70S initiation complex. The polypeptide is Translation initiation factor 6 (Methanobrevibacter smithii (strain ATCC 35061 / DSM 861 / OCM 144 / PS)).